The sequence spans 387 residues: Phosphoglycerate kinase (387 aa).

Residues 21 to 23 (DLN), Arg36, 59 to 62 (HLGR), Arg113, and Arg146 contribute to the substrate site. ATP is bound by residues Lys197, Glu314, and 340 to 343 (GGDT).

The protein belongs to the phosphoglycerate kinase family. As to quaternary structure, monomer.

Its subcellular location is the cytoplasm. The catalysed reaction is (2R)-3-phosphoglycerate + ATP = (2R)-3-phospho-glyceroyl phosphate + ADP. It participates in carbohydrate degradation; glycolysis; pyruvate from D-glyceraldehyde 3-phosphate: step 2/5. The polypeptide is Phosphoglycerate kinase (Aliivibrio fischeri (strain ATCC 700601 / ES114) (Vibrio fischeri)).